The primary structure comprises 139 residues: Large ribosomal subunit protein uL16 (139 aa).

A compositionally biased stretch (basic residues) spans 1–16; the sequence is MLIPKRTKYRKQHRPD. Residues 1–23 are disordered; the sequence is MLIPKRTKYRKQHRPDRHGMSKG.

It belongs to the universal ribosomal protein uL16 family. As to quaternary structure, part of the 50S ribosomal subunit.

Its function is as follows. Binds 23S rRNA and is also seen to make contacts with the A and possibly P site tRNAs. The protein is Large ribosomal subunit protein uL16 of Bifidobacterium animalis subsp. lactis (strain AD011).